Reading from the N-terminus, the 671-residue chain is tRNA(Met) cytidine acetyltransferase TmcA (671 aa).

Residues glutamine 180, 202 to 211 (GRGKSALAGQ), and arginine 319 contribute to the ATP site. An N-acetyltransferase domain is found at 356-531 (QTLWRSEPET…SGCYTAMALL (176 aa)). Residues 461-463 (IAV), 468-474 (QREGTGR), glutamate 499, and arginine 506 contribute to the acetyl-CoA site.

This sequence belongs to the RNA cytidine acetyltransferase family. TmcA subfamily.

The protein resides in the cytoplasm. It carries out the reaction cytidine(34) in elongator tRNA(Met) + acetyl-CoA + ATP + H2O = N(4)-acetylcytidine(34) in elongator tRNA(Met) + ADP + phosphate + CoA + H(+). Catalyzes the formation of N(4)-acetylcytidine (ac(4)C) at the wobble position of tRNA(Met), by using acetyl-CoA as an acetyl donor and ATP (or GTP). The chain is tRNA(Met) cytidine acetyltransferase TmcA from Shigella flexneri serotype 5b (strain 8401).